A 533-amino-acid polypeptide reads, in one-letter code: Thromboxane-A synthase (533 aa).

The Cytoplasmic segment spans residues 1 to 10 (MEALGFLKLE). Residues 11–31 (VNGPMVTVALSVALLALLKWY) form a helical membrane-spanning segment. Topologically, residues 32-75 (STSAFSRLEKLGLRHPKPSPFIGNLMFFRQGFWESQMELRKLYG) are lumenal. The helical transmembrane segment at 76–96 (PLCGYYLGRRMFIVISEPDMI) threads the bilayer. Residues 97–223 (KQVLVENFSN…KRFFEFCIPR (127 aa)) are Cytoplasmic-facing. Residues 224 to 244 (PILVLLLSFPSIMVPLARILP) form a helical membrane-spanning segment. Residues 245 to 335 (NKNRDELNGF…LTVDEIVGQA (91 aa)) are Lumenal-facing. Residues 336–356 (FIFLIAGYEIVTNTLSFATYL) traverse the membrane as a helical segment. Residues 357-533 (LATNPDCQEK…NGVYIKIVSR (177 aa)) lie on the Cytoplasmic side of the membrane. Residue cysteine 479 participates in heme binding.

Belongs to the cytochrome P450 family. Monomer. Requires heme as cofactor.

The protein resides in the endoplasmic reticulum membrane. The enzyme catalyses prostaglandin H2 = thromboxane A2. It carries out the reaction prostaglandin H2 = (12S)-hydroxy-(5Z,8E,10E)-heptadecatrienoate + malonaldehyde. The catalysed reaction is a hydroperoxyeicosatetraenoate = an oxoeicosatetraenoate + H2O. It catalyses the reaction (15S)-hydroperoxy-(5Z,8Z,11Z,13E)-eicosatetraenoate = 15-oxo-(5Z,8Z,11Z,13E)-eicosatetraenoate + H2O. The enzyme catalyses (15S)-hydroperoxy-(5Z,8Z,11Z,13E)-eicosatetraenoate + AH2 = (15S)-hydroxy-(5Z,8Z,11Z,13E)-eicosatetraenoate + A + H2O. Its function is as follows. Catalyzes the conversion of prostaglandin H2 (PGH2) to thromboxane A2 (TXA2), a potent inducer of blood vessel constriction and platelet aggregation. Also cleaves PGH2 to 12-hydroxy-heptadecatrienoicacid (12-HHT) and malondialdehyde, which is known to act as a mediator of DNA damage. 12-HHT and malondialdehyde are formed stoichiometrically in the same amounts as TXA2. Additionally, displays dehydratase activity, toward (15S)-hydroperoxy-(5Z,8Z,11Z,13E)-eicosatetraenoate (15(S)-HPETE) producing 15-KETE and 15-HETE. This is Thromboxane-A synthase (TBXAS1) from Macaca fascicularis (Crab-eating macaque).